The chain runs to 216 residues: Large ribosomal subunit protein uL3 (216 aa).

An N5-methylglutamine modification is found at Gln-153.

This sequence belongs to the universal ribosomal protein uL3 family. In terms of assembly, part of the 50S ribosomal subunit. Forms a cluster with proteins L14 and L19. Post-translationally, methylated by PrmB.

Its function is as follows. One of the primary rRNA binding proteins, it binds directly near the 3'-end of the 23S rRNA, where it nucleates assembly of the 50S subunit. This Burkholderia multivorans (strain ATCC 17616 / 249) protein is Large ribosomal subunit protein uL3.